A 638-amino-acid polypeptide reads, in one-letter code: Phenylethylamine oxidase (638 aa).

Residues M1–T2 constitute a propeptide that is removed on maturation. Y296–Y307 contributes to the substrate binding site. D298 serves as the catalytic Proton acceptor. C317 and C343 are disulfide-bonded. I379–Y384 contributes to the substrate binding site. Y382 functions as the Schiff-base intermediate with substrate; via topaquinone in the catalytic mechanism. 2',4',5'-topaquinone is present on Y382. H431, H433, and H592 together coordinate Cu cation.

This sequence belongs to the copper/topaquinone oxidase family. In terms of assembly, homodimer. Cu cation serves as cofactor. It depends on L-topaquinone as a cofactor. Post-translationally, topaquinone (TPQ) is generated by copper-dependent autoxidation of a specific tyrosyl residue.

It carries out the reaction a primary methyl amine + O2 + H2O = an aldehyde + H2O2 + NH4(+). The catalysed reaction is 2-phenylethylamine + O2 + H2O = 2-phenylacetaldehyde + H2O2 + NH4(+). Catalyzes the oxidative deamination of phenylethylamine to phenylacetaldehyde with the concomitant production of hydrogen peroxide and ammonia. The sequence is that of Phenylethylamine oxidase from Arthrobacter globiformis.